Here is a 281-residue protein sequence, read N- to C-terminus: Polyamine aminopropyltransferase (281 aa).

A PABS domain is found at 2–236 (DLWLKEGQIS…GYWSFTIGSK (235 aa)). An S-methyl-5'-thioadenosine-binding site is contributed by glutamine 31. Histidine 62 and aspartate 86 together coordinate spermidine. Residues glutamate 106 and 138-139 (DG) contribute to the S-methyl-5'-thioadenosine site. Catalysis depends on aspartate 156, which acts as the Proton acceptor. 156 to 159 (DSTD) serves as a coordination point for spermidine.

It belongs to the spermidine/spermine synthase family. As to quaternary structure, homodimer or homotetramer.

The protein localises to the cytoplasm. It carries out the reaction S-adenosyl 3-(methylsulfanyl)propylamine + putrescine = S-methyl-5'-thioadenosine + spermidine + H(+). The protein operates within amine and polyamine biosynthesis; spermidine biosynthesis; spermidine from putrescine: step 1/1. In terms of biological role, catalyzes the irreversible transfer of a propylamine group from the amino donor S-adenosylmethioninamine (decarboxy-AdoMet) to putrescine (1,4-diaminobutane) to yield spermidine. This Clostridium tetani (strain Massachusetts / E88) protein is Polyamine aminopropyltransferase.